Reading from the N-terminus, the 85-residue chain is Putative defensin-like protein 142 (85 aa).

The N-terminal stretch at 1-24 is a signal peptide; sequence MKKSFLFTFTVLTIFTILVIGVAP. Cystine bridges form between Cys30–Cys78, Cys41–Cys63, Cys46–Cys73, and Cys50–Cys75.

This sequence belongs to the DEFL family.

Its subcellular location is the secreted. This Arabidopsis thaliana (Mouse-ear cress) protein is Putative defensin-like protein 142 (LCR34).